We begin with the raw amino-acid sequence, 985 residues long: Exocyst complex component 4 (985 aa).

Residues 36-70 adopt a coiled-coil conformation; the sequence is SETTEERQKEKQKIEAEFKRSDLRLNELVSRHDQQ. Residues Ser-235, Ser-456, Ser-459, Ser-682, and Ser-686 each carry the phosphoserine modification. Residues 434 to 480 form a disordered region; the sequence is DKSSHVGTSNNSDAFKEHRRNASDASVDDNLAGQLGGSGKGSTSGLF.

It belongs to the SEC8 family. The exocyst complex is composed of Sec3/Exoc1, Sec5/Exoc2, Sec6/Exoc3, Sec8/Exoc4, Sec10/Exoc5, Sec15/Exoc6, exo70/Exoc7 and Exo84/Exoc8. In terms of tissue distribution, abundant in the embryonic and larval glutamatergic neuromuscular junctions (NMJs), pre and postsynaptically.

Component of the exocyst complex involved in the docking of exocytic vesicles with fusion sites on the plasma membrane. Involved in regulation of synaptic microtubule formation, and also regulation of synaptic growth and glutamate receptor trafficking. Does not appear to be required for basal neurotransmission. The protein is Exocyst complex component 4 of Drosophila melanogaster (Fruit fly).